Here is a 438-residue protein sequence, read N- to C-terminus: tRNA(Ile)-lysidine synthase (438 aa).

Position 27–32 (serine 27–serine 32) interacts with ATP.

This sequence belongs to the tRNA(Ile)-lysidine synthase family.

Its subcellular location is the cytoplasm. The catalysed reaction is cytidine(34) in tRNA(Ile2) + L-lysine + ATP = lysidine(34) in tRNA(Ile2) + AMP + diphosphate + H(+). Its function is as follows. Ligates lysine onto the cytidine present at position 34 of the AUA codon-specific tRNA(Ile) that contains the anticodon CAU, in an ATP-dependent manner. Cytidine is converted to lysidine, thus changing the amino acid specificity of the tRNA from methionine to isoleucine. In Vibrio parahaemolyticus serotype O3:K6 (strain RIMD 2210633), this protein is tRNA(Ile)-lysidine synthase.